The following is a 227-amino-acid chain: 2,3-bisphosphoglycerate-dependent phosphoglycerate mutase (227 aa).

Residues 8–15 (RHGKSVWN), 21–22 (TG), R58, 110–113 (ERMY), K121, 137–138 (RR), and 181–182 (GN) each bind substrate. The active-site Tele-phosphohistidine intermediate is H9. Catalysis depends on E110, which acts as the Proton donor/acceptor.

The protein belongs to the phosphoglycerate mutase family. BPG-dependent PGAM subfamily.

It carries out the reaction (2R)-2-phosphoglycerate = (2R)-3-phosphoglycerate. The protein operates within carbohydrate degradation; glycolysis; pyruvate from D-glyceraldehyde 3-phosphate: step 3/5. Its function is as follows. Catalyzes the interconversion of 2-phosphoglycerate and 3-phosphoglycerate. This chain is 2,3-bisphosphoglycerate-dependent phosphoglycerate mutase, found in Chlamydia caviae (strain ATCC VR-813 / DSM 19441 / 03DC25 / GPIC) (Chlamydophila caviae).